The sequence spans 401 residues: Elongation factor Tu 2 (401 aa).

In terms of domain architecture, tr-type G spans Lys10–Val209. Residues Gly19–Thr26 are G1. Position 19–26 (Gly19–Thr26) interacts with GTP. Thr26 is a Mg(2+) binding site. Residues Gly60–Ala64 form a G2 region. Positions Asp81–Gly84 are G3. Residues Asp81 to His85 and Asn136 to Asp139 each bind GTP. The segment at Asn136–Asp139 is G4. The segment at Ser174–Leu176 is G5.

The protein belongs to the TRAFAC class translation factor GTPase superfamily. Classic translation factor GTPase family. EF-Tu/EF-1A subfamily. As to quaternary structure, monomer.

It is found in the cytoplasm. The enzyme catalyses GTP + H2O = GDP + phosphate + H(+). In terms of biological role, GTP hydrolase that promotes the GTP-dependent binding of aminoacyl-tRNA to the A-site of ribosomes during protein biosynthesis. This chain is Elongation factor Tu 2, found in Roseiflexus castenholzii (strain DSM 13941 / HLO8).